We begin with the raw amino-acid sequence, 115 residues long: Large ribosomal subunit protein bL20c (115 aa).

This sequence belongs to the bacterial ribosomal protein bL20 family.

Its subcellular location is the plastid. It is found in the chloroplast. Binds directly to 23S ribosomal RNA and is necessary for the in vitro assembly process of the 50S ribosomal subunit. It is not involved in the protein synthesizing functions of that subunit. This Gnetum parvifolium (Small-leaved jointfir) protein is Large ribosomal subunit protein bL20c.